We begin with the raw amino-acid sequence, 455 residues long: MASLNENQKFWARVTELAQQSIGKQAYDFFIEPAQLMSVEQDTANILLDSGMKKDYWKKQSDLITTAGFEVFGRMIDYELYANDELTELELHRLNNQSSIEEQPRSTAKPASPLVSGLNEKYNFENFVQGPGNRWTLAAAIAVADKPGDTYNPLFIYGGAGLGKTHLMHAIGNQILTDNPTARIKYVSSENFVNDYVNATRKNQMENFENTYRNLDLLLLDDVQFFSDKEGTKNEFFNTFNALYDKGSQIVLTSDRIPQELNNLEDRLVSRFSWGLTTDITAPDYETRMAILLIKSESSRLEFPSETLSYIAGQIDSNVRELEGALNRVEFVARANGIAVVDIETASQALRSLKNATQQSLSNLTIKKIQDEVANYYHISFSDLVGPKRPKEIAFPRQIAMYLVRELLGTSLPAIGTAFGGRDHTTVMYAYKQISDKMKNDMDVQKDIDSIKRKF.

The interval 1-77 (MASLNENQKF…GFEVFGRMID (77 aa)) is domain I, interacts with DnaA modulators. The segment at 77-116 (DYELYANDELTELELHRLNNQSSIEEQPRSTAKPASPLVS) is domain II. The segment at 117–333 (GLNEKYNFEN…GALNRVEFVA (217 aa)) is domain III, AAA+ region. 4 residues coordinate ATP: Gly161, Gly163, Lys164, and Thr165. The domain IV, binds dsDNA stretch occupies residues 334 to 455 (RANGIAVVDI…KDIDSIKRKF (122 aa)).

It belongs to the DnaA family. As to quaternary structure, oligomerizes as a right-handed, spiral filament on DNA at oriC.

It localises to the cytoplasm. Functionally, plays an essential role in the initiation and regulation of chromosomal replication. ATP-DnaA binds to the origin of replication (oriC) to initiate formation of the DNA replication initiation complex once per cell cycle. Binds the DnaA box (a 9 base pair repeat at the origin) and separates the double-stranded (ds)DNA. Forms a right-handed helical filament on oriC DNA; dsDNA binds to the exterior of the filament while single-stranded (ss)DNA is stabiized in the filament's interior. The ATP-DnaA-oriC complex binds and stabilizes one strand of the AT-rich DNA unwinding element (DUE), permitting loading of DNA polymerase. After initiation quickly degrades to an ADP-DnaA complex that is not apt for DNA replication. Binds acidic phospholipids. This chain is Chromosomal replication initiator protein DnaA, found in Lactococcus lactis subsp. lactis (strain IL1403) (Streptococcus lactis).